We begin with the raw amino-acid sequence, 355 residues long: MSGKTKRLMVMAGGTGGHVFPGLAVAHHLMAQGWQVRWLGTADRMEASLVPKNGIEIDFIEISGLRGKGLMAQLTAPVRIYRAVRQAKKIMRDYQPDVVLGMGGYVSGPGGLAAWLCGIPVVLHEQNGIAGLTNRWLARIAKKVLQAFPGAFPNADVVGNPVRTDVLALPLPAQRLVGREGPIRVLVIGGSQGARVLNQTMPQVAATLGEQITIWHQVGKGALPDVLQAYQQAGQGDKHQVVEFIDDMAAAYAWADVVVCRSGALTVSEVAAAGLPAIFVPFQHKDRQQYWNALPLEKAGAAKIIEQPQFTAQAVSNLLAEWDRPTLLAMAEQARLVAIPDATERVAAEVAAASK.

UDP-N-acetyl-alpha-D-glucosamine is bound by residues 15 to 17, Asn-127, Arg-163, Ser-191, Ile-245, 264 to 269, and Gln-289; these read TGG and ALTVSE.

The protein belongs to the glycosyltransferase 28 family. MurG subfamily.

It localises to the cell inner membrane. It catalyses the reaction di-trans,octa-cis-undecaprenyl diphospho-N-acetyl-alpha-D-muramoyl-L-alanyl-D-glutamyl-meso-2,6-diaminopimeloyl-D-alanyl-D-alanine + UDP-N-acetyl-alpha-D-glucosamine = di-trans,octa-cis-undecaprenyl diphospho-[N-acetyl-alpha-D-glucosaminyl-(1-&gt;4)]-N-acetyl-alpha-D-muramoyl-L-alanyl-D-glutamyl-meso-2,6-diaminopimeloyl-D-alanyl-D-alanine + UDP + H(+). Its pathway is cell wall biogenesis; peptidoglycan biosynthesis. Its function is as follows. Cell wall formation. Catalyzes the transfer of a GlcNAc subunit on undecaprenyl-pyrophosphoryl-MurNAc-pentapeptide (lipid intermediate I) to form undecaprenyl-pyrophosphoryl-MurNAc-(pentapeptide)GlcNAc (lipid intermediate II). In Yersinia enterocolitica serotype O:8 / biotype 1B (strain NCTC 13174 / 8081), this protein is UDP-N-acetylglucosamine--N-acetylmuramyl-(pentapeptide) pyrophosphoryl-undecaprenol N-acetylglucosamine transferase.